A 462-amino-acid polypeptide reads, in one-letter code: Bifunctional protein GlmU (462 aa).

The interval 1-239 is pyrophosphorylase; that stretch reads MTESVSKPVR…EASVQGVNAQ (239 aa). UDP-N-acetyl-alpha-D-glucosamine is bound by residues 17–20, lysine 31, glutamine 84, and 89–90; these read LAAG and GT. Aspartate 114 contacts Mg(2+). Residues glycine 150, glutamate 165, asparagine 180, and asparagine 237 each contribute to the UDP-N-acetyl-alpha-D-glucosamine site. Asparagine 237 contacts Mg(2+). Residues 240–260 are linker; sequence AELAAAEAVWQQNRRKALMVD. The segment at 261–462 is N-acetyltransferase; the sequence is GVTMPAPDTV…QKDKKKDKKA (202 aa). UDP-N-acetyl-alpha-D-glucosamine contacts are provided by arginine 326 and lysine 344. Catalysis depends on histidine 356, which acts as the Proton acceptor. UDP-N-acetyl-alpha-D-glucosamine contacts are provided by tyrosine 359 and asparagine 370. Residues alanine 373, 379 to 380, serine 398, serine 416, and arginine 433 each bind acetyl-CoA; that span reads NY.

This sequence in the N-terminal section; belongs to the N-acetylglucosamine-1-phosphate uridyltransferase family. In the C-terminal section; belongs to the transferase hexapeptide repeat family. Homotrimer. It depends on Mg(2+) as a cofactor.

It localises to the cytoplasm. The catalysed reaction is alpha-D-glucosamine 1-phosphate + acetyl-CoA = N-acetyl-alpha-D-glucosamine 1-phosphate + CoA + H(+). The enzyme catalyses N-acetyl-alpha-D-glucosamine 1-phosphate + UTP + H(+) = UDP-N-acetyl-alpha-D-glucosamine + diphosphate. It participates in nucleotide-sugar biosynthesis; UDP-N-acetyl-alpha-D-glucosamine biosynthesis; N-acetyl-alpha-D-glucosamine 1-phosphate from alpha-D-glucosamine 6-phosphate (route II): step 2/2. The protein operates within nucleotide-sugar biosynthesis; UDP-N-acetyl-alpha-D-glucosamine biosynthesis; UDP-N-acetyl-alpha-D-glucosamine from N-acetyl-alpha-D-glucosamine 1-phosphate: step 1/1. Its pathway is bacterial outer membrane biogenesis; LPS lipid A biosynthesis. Catalyzes the last two sequential reactions in the de novo biosynthetic pathway for UDP-N-acetylglucosamine (UDP-GlcNAc). The C-terminal domain catalyzes the transfer of acetyl group from acetyl coenzyme A to glucosamine-1-phosphate (GlcN-1-P) to produce N-acetylglucosamine-1-phosphate (GlcNAc-1-P), which is converted into UDP-GlcNAc by the transfer of uridine 5-monophosphate (from uridine 5-triphosphate), a reaction catalyzed by the N-terminal domain. The polypeptide is Bifunctional protein GlmU (Caulobacter vibrioides (strain ATCC 19089 / CIP 103742 / CB 15) (Caulobacter crescentus)).